The chain runs to 159 residues: Probable cyclic pyranopterin monophosphate synthase (159 aa).

Substrate is bound by residues 75-77 and 111-112; these read LCH and ME. Residue Asp126 is part of the active site.

This sequence belongs to the MoaC family. As to quaternary structure, homohexamer; trimer of dimers.

The enzyme catalyses (8S)-3',8-cyclo-7,8-dihydroguanosine 5'-triphosphate = cyclic pyranopterin phosphate + diphosphate. Its pathway is cofactor biosynthesis; molybdopterin biosynthesis. In terms of biological role, catalyzes the conversion of (8S)-3',8-cyclo-7,8-dihydroguanosine 5'-triphosphate to cyclic pyranopterin monophosphate (cPMP). The polypeptide is Probable cyclic pyranopterin monophosphate synthase (Pyrococcus abyssi (strain GE5 / Orsay)).